A 317-amino-acid chain; its full sequence is Ornithine carbamoyltransferase (317 aa).

Carbamoyl phosphate-binding positions include 57–60 (STRT), Gln84, Arg108, and 135–138 (HPCQ). L-ornithine contacts are provided by residues Asn166, Asp230, and 234–235 (SM). Carbamoyl phosphate-binding positions include 270–271 (CL) and Arg298.

This sequence belongs to the aspartate/ornithine carbamoyltransferase superfamily. OTCase family. Homododecamer.

It localises to the cytoplasm. It catalyses the reaction carbamoyl phosphate + L-ornithine = L-citrulline + phosphate + H(+). The protein operates within amino-acid biosynthesis; L-arginine biosynthesis; L-arginine from L-ornithine and carbamoyl phosphate: step 1/3. Functionally, reversibly catalyzes the transfer of the carbamoyl group from carbamoyl phosphate (CP) to the N(epsilon) atom of ornithine (ORN) to produce L-citrulline. In Pyrococcus horikoshii (strain ATCC 700860 / DSM 12428 / JCM 9974 / NBRC 100139 / OT-3), this protein is Ornithine carbamoyltransferase.